The primary structure comprises 239 residues: Ribonuclease PH (239 aa).

Phosphate contacts are provided by residues Arg86 and Gly124–Arg126.

It belongs to the RNase PH family. Homohexameric ring arranged as a trimer of dimers.

It carries out the reaction tRNA(n+1) + phosphate = tRNA(n) + a ribonucleoside 5'-diphosphate. Its function is as follows. Phosphorolytic 3'-5' exoribonuclease that plays an important role in tRNA 3'-end maturation. Removes nucleotide residues following the 3'-CCA terminus of tRNAs; can also add nucleotides to the ends of RNA molecules by using nucleoside diphosphates as substrates, but this may not be physiologically important. Probably plays a role in initiation of 16S rRNA degradation (leading to ribosome degradation) during starvation. In Sinorhizobium fredii (strain NBRC 101917 / NGR234), this protein is Ribonuclease PH.